The sequence spans 118 residues: Cell division topological specificity factor (118 aa).

The interval 86–118 (RSQAKAVSSQENGASSQEAVSSQESVSTPGAME) is disordered. Low complexity predominate over residues 99 to 112 (ASSQEAVSSQESVS).

Belongs to the MinE family.

Its function is as follows. Prevents the cell division inhibition by proteins MinC and MinD at internal division sites while permitting inhibition at polar sites. This ensures cell division at the proper site by restricting the formation of a division septum at the midpoint of the long axis of the cell. This is Cell division topological specificity factor from Prochlorococcus marinus (strain MIT 9313).